Reading from the N-terminus, the 199-residue chain is Shikimate kinase (199 aa).

Residue 12–17 coordinates ATP; sequence GAGKST. Residue S16 coordinates Mg(2+). The substrate site is built by D34, R58, and G80. R117 is an ATP binding site. R136 is a binding site for substrate. The tract at residues 174–199 is disordered; the sequence is VSGGDRKSSEAERSGAPLRKSSEVVK. Over residues 177-186 the composition is skewed to basic and acidic residues; that stretch reads GDRKSSEAER.

The protein belongs to the shikimate kinase family. In terms of assembly, monomer. It depends on Mg(2+) as a cofactor.

Its subcellular location is the cytoplasm. It catalyses the reaction shikimate + ATP = 3-phosphoshikimate + ADP + H(+). It participates in metabolic intermediate biosynthesis; chorismate biosynthesis; chorismate from D-erythrose 4-phosphate and phosphoenolpyruvate: step 5/7. In terms of biological role, catalyzes the specific phosphorylation of the 3-hydroxyl group of shikimic acid using ATP as a cosubstrate. The sequence is that of Shikimate kinase from Mycobacterium leprae (strain TN).